The chain runs to 295 residues: Lipoyl synthase (295 aa).

The [4Fe-4S] cluster site is built by C34, C39, C45, C60, C64, C67, and S273. The 217-residue stretch at 46 to 262 (WNKRHATIMV…KRMAYAKGFS (217 aa)) folds into the Radical SAM core domain.

It belongs to the radical SAM superfamily. Lipoyl synthase family. Requires [4Fe-4S] cluster as cofactor.

The protein localises to the cytoplasm. It carries out the reaction [[Fe-S] cluster scaffold protein carrying a second [4Fe-4S](2+) cluster] + N(6)-octanoyl-L-lysyl-[protein] + 2 oxidized [2Fe-2S]-[ferredoxin] + 2 S-adenosyl-L-methionine + 4 H(+) = [[Fe-S] cluster scaffold protein] + N(6)-[(R)-dihydrolipoyl]-L-lysyl-[protein] + 4 Fe(3+) + 2 hydrogen sulfide + 2 5'-deoxyadenosine + 2 L-methionine + 2 reduced [2Fe-2S]-[ferredoxin]. It participates in protein modification; protein lipoylation via endogenous pathway; protein N(6)-(lipoyl)lysine from octanoyl-[acyl-carrier-protein]: step 2/2. Its function is as follows. Catalyzes the radical-mediated insertion of two sulfur atoms into the C-6 and C-8 positions of the octanoyl moiety bound to the lipoyl domains of lipoate-dependent enzymes, thereby converting the octanoylated domains into lipoylated derivatives. The sequence is that of Lipoyl synthase from Anaplasma phagocytophilum (strain HZ).